The primary structure comprises 416 residues: Enolase (416 aa).

Gln-160 contributes to the (2R)-2-phosphoglycerate binding site. The active-site Proton donor is the Glu-204. The Mg(2+) site is built by Asp-239, Glu-282, and Asp-308. Residues Lys-333, Arg-362, Ser-363, and Lys-384 each coordinate (2R)-2-phosphoglycerate. Residue Lys-333 is the Proton acceptor of the active site.

Belongs to the enolase family. Mg(2+) serves as cofactor.

The protein resides in the cytoplasm. The protein localises to the secreted. It localises to the cell surface. It carries out the reaction (2R)-2-phosphoglycerate = phosphoenolpyruvate + H2O. It functions in the pathway carbohydrate degradation; glycolysis; pyruvate from D-glyceraldehyde 3-phosphate: step 4/5. Functionally, catalyzes the reversible conversion of 2-phosphoglycerate (2-PG) into phosphoenolpyruvate (PEP). It is essential for the degradation of carbohydrates via glycolysis. The protein is Enolase of Metallosphaera sedula (strain ATCC 51363 / DSM 5348 / JCM 9185 / NBRC 15509 / TH2).